Reading from the N-terminus, the 166-residue chain is Protein SprT (166 aa).

A SprT-like domain is found at 21–160 (ANQHFSREFP…CQQCQQTLAF (140 aa)). Residue histidine 74 coordinates Zn(2+). Residue glutamate 75 is part of the active site. Histidine 78 provides a ligand contact to Zn(2+).

The protein belongs to the SprT family. The cofactor is Zn(2+).

It localises to the cytoplasm. The polypeptide is Protein SprT (Vibrio atlanticus (strain LGP32) (Vibrio splendidus (strain Mel32))).